The chain runs to 39 residues: Natriuretic peptide HsNP-a (39 aa).

Residues 1 to 8 constitute a propeptide that is removed on maturation; it reads SGSKTAKI. A disulfide bridge links Cys-12 with Cys-28.

Belongs to the natriuretic peptide family. Expressed by the venom gland.

The protein localises to the secreted. In terms of biological role, snake venom natriuretic peptide that targets both NPR1 and NPR2. Exhibits hypotensive and vasodepressor activities. This is Natriuretic peptide HsNP-a from Hoplocephalus stephensii (Stephens's banded snake).